The following is a 478-amino-acid chain: Noelin-3 (478 aa).

The signal sequence occupies residues 1–23 (MSPPLLKLGAVLSTMAMISNWMS). N-linked (GlcNAc...) asparagine glycans are attached at residues Asn33, Asn95, Asn179, Asn299, and Asn465. Residues 77–217 (CSRDAKSRQL…TRLRDCMKKL (141 aa)) are a coiled coil. The Olfactomedin-like domain occupies 218–470 (TCGKLMKITG…QVLFNVTLFH (253 aa)). Cys219 and Cys401 are oxidised to a cystine.

Peripherally associated with AMPAR complex. AMPAR complex consists of an inner core made of 4 pore-forming GluA/GRIA proteins (GRIA1, GRIA2, GRIA3 and GRIA4) and 4 major auxiliary subunits arranged in a twofold symmetry. One of the two pairs of distinct binding sites is occupied either by CNIH2, CNIH3 or CACNG2, CACNG3. The other harbors CACNG2, CACNG3, CACNG4, CACNG8 or GSG1L. This inner core of AMPAR complex is complemented by outer core constituents binding directly to the GluA/GRIA proteins at sites distinct from the interaction sites of the inner core constituents. Outer core constituents include at least PRRT1, PRRT2, CKAMP44/SHISA9, FRRS1L and NRN1. The proteins of the inner and outer core serve as a platform for other, more peripherally associated AMPAR constituents, including OLFM3. Alone or in combination, these auxiliary subunits control the gating and pharmacology of the AMPAR complex and profoundly impact their biogenesis and protein processing. Homodimer. Interacts with MYOC. Interacts with OLFM2. In the eye, expressed in trabecular meshwork and neural retina; in non-ocular tissues, expressed in brain and lung.

It localises to the secreted. The protein localises to the synapse. This chain is Noelin-3 (OLFM3), found in Homo sapiens (Human).